The sequence spans 202 residues: Syndecan-4 (202 aa).

The signal sequence occupies residues 1–23 (MAPVCLFAPLLLLLLGGFPVAPG). The Extracellular segment spans residues 24-149 (ESIRETEVID…QGSNIFERTE (126 aa)). Disordered stretches follow at residues 42–76 (YFSGALPDDEDAGGLEQDSDFELSGSGDLDDTEEP) and 89–138 (LDNH…MSST). Ser-44 carries O-linked (Xyl...) (glycosaminoglycan) serine glycosylation. Over residues 48–62 (PDDEDAGGLEQDSDF) the composition is skewed to acidic residues. Residues Ser-65 and Ser-67 are each glycosylated (O-linked (Xyl...) (glycosaminoglycan) serine). Over residues 105 to 121 (SEPKELEENEVIPKRVP) the composition is skewed to basic and acidic residues. The helical transmembrane segment at 150–174 (VLAALIVGGVVGILFAVFLILLLVY) threads the bilayer. Topologically, residues 175-202 (RMKKKDEGSYDLGKKPIYKKAPTNEFYA) are cytoplasmic.

This sequence belongs to the syndecan proteoglycan family. In terms of assembly, homodimer. Interacts with CDCP1 and SDCBP. Interacts (via its cytoplasmic domain) with GIPC (via its PDZ domain). Interacts (via its cytoplasmic domain) with NUDT16L1. Interacts with DNM2; this interaction is markedly enhanced at focal ahesion site upon induction of focal adhesions and stress-fiber formation. Shedding is enhanced by a number of factors such as heparanase, thrombin or EGF. Also by stress and wound healing. PMA-mediated shedding is inhibited by TIMP3. In terms of processing, O-glycosylated; contains both chondroitin sulfate and heparan sulfate. Ser-44, Ser-65 and Ser-67 can all be modified by either chondroitin sulfate or heparan sulfate, and the protein exists in forms that contain only chondroitin sulfate, only heparan sulfate and both chondroitin sulfate and heparan sulfate.

It is found in the membrane. It localises to the secreted. Cell surface proteoglycan which regulates exosome biogenesis in concert with SDCBP and PDCD6IP. In Rattus norvegicus (Rat), this protein is Syndecan-4.